Reading from the N-terminus, the 425-residue chain is Glutamyl-tRNA reductase (425 aa).

Residues 47-50 (TCNR), S107, 112-114 (EDQ), and Q118 contribute to the substrate site. The active-site Nucleophile is the C48. 187-192 (GAGHIA) contacts NADP(+).

This sequence belongs to the glutamyl-tRNA reductase family. As to quaternary structure, homodimer.

The enzyme catalyses (S)-4-amino-5-oxopentanoate + tRNA(Glu) + NADP(+) = L-glutamyl-tRNA(Glu) + NADPH + H(+). Its pathway is porphyrin-containing compound metabolism; protoporphyrin-IX biosynthesis; 5-aminolevulinate from L-glutamyl-tRNA(Glu): step 1/2. The protein operates within porphyrin-containing compound metabolism; chlorophyll biosynthesis. In terms of biological role, catalyzes the NADPH-dependent reduction of glutamyl-tRNA(Glu) to glutamate 1-semialdehyde (GSA). The sequence is that of Glutamyl-tRNA reductase from Roseiflexus sp. (strain RS-1).